A 287-amino-acid polypeptide reads, in one-letter code: Phosphatidylserine decarboxylase proenzyme (287 aa).

Residues Asp-89, His-146, and Ser-252 each act as charge relay system; for autoendoproteolytic cleavage activity in the active site. Ser-252 functions as the Schiff-base intermediate with substrate; via pyruvic acid; for decarboxylase activity in the catalytic mechanism. Ser-252 bears the Pyruvic acid (Ser); by autocatalysis mark.

It belongs to the phosphatidylserine decarboxylase family. PSD-B subfamily. Prokaryotic type I sub-subfamily. As to quaternary structure, heterodimer of a large membrane-associated beta subunit and a small pyruvoyl-containing alpha subunit. Requires pyruvate as cofactor. Post-translationally, is synthesized initially as an inactive proenzyme. Formation of the active enzyme involves a self-maturation process in which the active site pyruvoyl group is generated from an internal serine residue via an autocatalytic post-translational modification. Two non-identical subunits are generated from the proenzyme in this reaction, and the pyruvate is formed at the N-terminus of the alpha chain, which is derived from the carboxyl end of the proenzyme. The autoendoproteolytic cleavage occurs by a canonical serine protease mechanism, in which the side chain hydroxyl group of the serine supplies its oxygen atom to form the C-terminus of the beta chain, while the remainder of the serine residue undergoes an oxidative deamination to produce ammonia and the pyruvoyl prosthetic group on the alpha chain. During this reaction, the Ser that is part of the protease active site of the proenzyme becomes the pyruvoyl prosthetic group, which constitutes an essential element of the active site of the mature decarboxylase.

The protein resides in the cell membrane. The catalysed reaction is a 1,2-diacyl-sn-glycero-3-phospho-L-serine + H(+) = a 1,2-diacyl-sn-glycero-3-phosphoethanolamine + CO2. It functions in the pathway phospholipid metabolism; phosphatidylethanolamine biosynthesis; phosphatidylethanolamine from CDP-diacylglycerol: step 2/2. In terms of biological role, catalyzes the formation of phosphatidylethanolamine (PtdEtn) from phosphatidylserine (PtdSer). The chain is Phosphatidylserine decarboxylase proenzyme from Shewanella woodyi (strain ATCC 51908 / MS32).